Consider the following 489-residue polypeptide: 3-octaprenyl-4-hydroxybenzoate carboxy-lyase (489 aa).

Asn172 contacts Mn(2+). Prenylated FMN-binding positions include 175–177, 189–191, and 194–195; these read IYR, RWL, and RG. Residue Glu238 participates in Mn(2+) binding. Catalysis depends on Asp287, which acts as the Proton donor.

It belongs to the UbiD family. Homohexamer. Prenylated FMN serves as cofactor. Requires Mn(2+) as cofactor.

It is found in the cell membrane. It carries out the reaction a 4-hydroxy-3-(all-trans-polyprenyl)benzoate + H(+) = a 2-(all-trans-polyprenyl)phenol + CO2. It participates in cofactor biosynthesis; ubiquinone biosynthesis. In terms of biological role, catalyzes the decarboxylation of 3-octaprenyl-4-hydroxy benzoate to 2-octaprenylphenol, an intermediate step in ubiquinone biosynthesis. The polypeptide is 3-octaprenyl-4-hydroxybenzoate carboxy-lyase (Aeromonas hydrophila subsp. hydrophila (strain ATCC 7966 / DSM 30187 / BCRC 13018 / CCUG 14551 / JCM 1027 / KCTC 2358 / NCIMB 9240 / NCTC 8049)).